The sequence spans 620 residues: Membralin (620 aa).

The tract at residues 1 to 33 (MSEHVEPAAPGPGPNGGGGGPAPARGPRTPNLN) is disordered. An N-acetylserine modification is found at Ser2. Residues 22–31 (APARGPRTPN) show a composition bias toward low complexity. Phosphothreonine is present on Thr29. A helical membrane pass occupies residues 70 to 90 (FFVLLKALFVLFVLAYIHIVF). The N-linked (GlcNAc...) asparagine glycan is linked to Asn189. Helical transmembrane passes span 302 to 322 (TSYLAAFAIMVIFTLSVSMLL), 346 to 366 (IAFPAAPLLTVILALVGMEAI), and 426 to 446 (YSSLALVTSWLFIQHSMIYFF). Disordered regions lie at residues 474–517 (TPTA…GPVA) and 568–620 (SPLG…EVGS). Composition is skewed to low complexity over residues 499–517 (PPALGPVSPGASGSPGPVA) and 568–593 (SPLGPAGGLPHAPQDSVPPSDSAASD).

This sequence belongs to the membralin family. Interacts with ERLIN2.

Its subcellular location is the endoplasmic reticulum membrane. Its function is as follows. May have a role in the ERAD pathway required for clearance of misfolded proteins in the endoplasmic reticulum (ER). Promotes survival of motor neurons, probably by protecting against ER stress. The polypeptide is Membralin (TMEM259) (Homo sapiens (Human)).